The primary structure comprises 144 residues: Large ribosomal subunit protein uL15 (144 aa).

Residues 1–56 (MELNNLKPAAGAKHAKRRVGRGIGSGLGKTAGRGHKGQKSRSGGFHKVGFEGGQMP) are disordered. The span at 21-31 (RGIGSGLGKTA) shows a compositional bias: gly residues.

Belongs to the universal ribosomal protein uL15 family. In terms of assembly, part of the 50S ribosomal subunit.

Functionally, binds to the 23S rRNA. In Burkholderia cenocepacia (strain HI2424), this protein is Large ribosomal subunit protein uL15.